An 88-amino-acid chain; its full sequence is Small ribosomal subunit protein uS15 (88 aa).

Belongs to the universal ribosomal protein uS15 family. Part of the 30S ribosomal subunit. Forms a bridge to the 50S subunit in the 70S ribosome, contacting the 23S rRNA.

One of the primary rRNA binding proteins, it binds directly to 16S rRNA where it helps nucleate assembly of the platform of the 30S subunit by binding and bridging several RNA helices of the 16S rRNA. Functionally, forms an intersubunit bridge (bridge B4) with the 23S rRNA of the 50S subunit in the ribosome. This Mycoplasmopsis synoviae (strain 53) (Mycoplasma synoviae) protein is Small ribosomal subunit protein uS15.